The chain runs to 504 residues: ATP-dependent rRNA helicase RRP3 (504 aa).

Over residues 34-62 (ASASSAASTKESLPVSETISISTSETPVS) the composition is skewed to low complexity. The interval 34 to 99 (ASASSAASTK…SSSSPPSVQS (66 aa)) is disordered. A compositionally biased stretch (basic and acidic residues) spans 68 to 79 (SNKEDLSTKKDQ). A compositionally biased stretch (low complexity) spans 80-99 (SSASSSSSTSSSSSPPSVQS). The Q motif motif lies at 98-126 (QSFTEFDLVPELLESIQSLKYTQPTPIQA). The region spanning 129–301 (IPHALQGKDI…RSLNSPVQVE (173 aa)) is the Helicase ATP-binding domain. ATP is bound at residue 142–149 (AETGSGKT). The DEAD box signature appears at 248 to 251 (DEVD). The Helicase C-terminal domain occupies 327–471 (RLIQIVNLDS…DLPLDEMQGL (145 aa)).

It belongs to the DEAD box helicase family. DDX47/RRP3 subfamily. In terms of assembly, interacts with the SSU processome.

Its subcellular location is the nucleus. It catalyses the reaction ATP + H2O = ADP + phosphate + H(+). Functionally, ATP-dependent rRNA helicase required for pre-ribosomal RNA processing. Involved in the maturation of the 35S-pre-rRNA and to its cleavage to mature 18S rRNA. This is ATP-dependent rRNA helicase RRP3 from Lodderomyces elongisporus (strain ATCC 11503 / CBS 2605 / JCM 1781 / NBRC 1676 / NRRL YB-4239) (Yeast).